We begin with the raw amino-acid sequence, 355 residues long: LIM/homeobox protein lim-4 (355 aa).

2 consecutive LIM zinc-binding domains span residues 96-155 (VICT…THVT) and 166-228 (PKCA…LVEG). Positions 239-298 (TKRVRTTFAEDQLSVLQTYFNRDSNPDGADLEKIASMTGLSKRVTQVWFQNSRARQKKWH) form a DNA-binding region, homeobox. A disordered region spans residues 291–336 (RARQKKWHQKSEGDNGDSQRSSVGPSSPSQKSDSSSEMMYPTSVTT). Residues 306-326 (GDSQRSSVGPSSPSQKSDSSS) show a composition bias toward low complexity.

As to quaternary structure, interacts with transcription factor sox-2. Expressed in the AWB sensory neurons and in one RME motor neuron (RMEV), two RMD motor neurons (RMDL and RMDR), the RID, RIV, SAA and SIA interneurons and the SMB sensory/inter/motor neurons.

The protein resides in the nucleus. Functionally, transcription factor that binds to the promoter of target genes. Regulates genes involved in serotonin synthesis and release in serotonergic ADF neurons. Involved in specification of neuron cell fate, olfactory receptor expression, locomotion, and foraging behavior. Required in AWB olfactory neurons to repress AWC cell fate and promote the AWB cell fate during early development. Cooperates with additional factors to direct the differentiation of the olfactory neurons, functioning with the transcription factor sox-2 to suppress AWC terminal differentiation and promote AWB neuron differentiation. Involved in regulating terminal specification and maintenance of the SMB sensory/inter/motor neurons. Plays a role in regulation of RID motor neuron differentiation, but is dispensable for motor axon outgrowth in the dorsal nerve cord. May regulate its own expression. The protein is LIM/homeobox protein lim-4 of Caenorhabditis elegans.